Here is a 568-residue protein sequence, read N- to C-terminus: Sulfite reductase [NADPH] hemoprotein beta-component (568 aa).

4 residues coordinate [4Fe-4S] cluster: Cys-425, Cys-431, Cys-470, and Cys-474. Residue Cys-474 participates in siroheme binding.

This sequence belongs to the nitrite and sulfite reductase 4Fe-4S domain family. In terms of assembly, alpha(8)-beta(8). The alpha component is a flavoprotein, the beta component is a hemoprotein. It depends on siroheme as a cofactor. [4Fe-4S] cluster serves as cofactor.

It carries out the reaction hydrogen sulfide + 3 NADP(+) + 3 H2O = sulfite + 3 NADPH + 4 H(+). It functions in the pathway sulfur metabolism; hydrogen sulfide biosynthesis; hydrogen sulfide from sulfite (NADPH route): step 1/1. Functionally, component of the sulfite reductase complex that catalyzes the 6-electron reduction of sulfite to sulfide. This is one of several activities required for the biosynthesis of L-cysteine from sulfate. The polypeptide is Sulfite reductase [NADPH] hemoprotein beta-component (Xanthomonas euvesicatoria pv. vesicatoria (strain 85-10) (Xanthomonas campestris pv. vesicatoria)).